A 1088-amino-acid polypeptide reads, in one-letter code: RNA-directed RNA polymerase (1088 aa).

The RdRp catalytic domain occupies 501–687 (LSYGDVTRFL…AKRYIAGGKI (187 aa)).

The protein belongs to the reoviridae RNA-directed RNA polymerase family. In terms of assembly, interacts with VP3 (Potential). Interacts with VP2; this interaction activates VP1. Interacts with NSP5; this interaction is probably necessary for the formation of functional virus factories. Interacts with NSP2; this interaction is weak. It depends on Mg(2+) as a cofactor.

The protein localises to the virion. It catalyses the reaction RNA(n) + a ribonucleoside 5'-triphosphate = RNA(n+1) + diphosphate. Its function is as follows. RNA-directed RNA polymerase that is involved in both transcription and genome replication. Together with VP3 capping enzyme, forms an enzyme complex positioned near the channels situated at each of the five-fold vertices of the core. Following infection, the outermost layer of the virus is lost, leaving a double-layered particle (DLP) made up of the core and VP6 shell. VP1 then catalyzes the transcription of fully conservative plus-strand genomic RNAs that are extruded through the DLP's channels into the cytoplasm where they function as mRNAs for translation of viral proteins. One copy of each of the viral (+)RNAs is also recruited during core assembly, together with newly synthesized polymerase complexes and VP2. The polymerase of these novo-formed particles catalyzes the synthesis of complementary minus-strands leading to dsRNA formation. To do so, the polymerase specifically recognizes and binds 4 bases 5'-UGUG-3' in the conserved 3'-sequence of plus-strand RNA templates. VP2 presumably activates the autoinhibited VP1-RNA complex to coordinate packaging and genome replication. Once dsRNA synthesis is complete, the polymerase switches to the transcriptional mode, thus providing secondary transcription. This Chlorocebus pygerythrus (Vervet monkey) protein is RNA-directed RNA polymerase.